The sequence spans 245 residues: Ribosome maturation factor RimP (245 aa).

Belongs to the RimP family.

It is found in the cytoplasm. Functionally, required for maturation of 30S ribosomal subunits. The protein is Ribosome maturation factor RimP of Verminephrobacter eiseniae (strain EF01-2).